The primary structure comprises 232 residues: N-acetyltransferase 8B (232 aa).

Topologically, residues 1–62 (MPRFEAQKSS…FLLLLGVPLA (62 aa)) are cytoplasmic. The chain crosses the membrane as a helical; Signal-anchor for type II membrane protein span at residues 63–83 (LVLVSGSWILAVICIFFLLLL). Residues 79 to 224 (FLLLLLRLLA…WRLVDICFIQ (146 aa)) enclose the N-acetyltransferase domain. Topologically, residues 84–232 (LRLLARQPWK…IQLNYSFPSA (149 aa)) are lumenal. At K109 the chain carries N6-acetyllysine.

Belongs to the NAT8 family. Post-translationally, acetylation on Lys-109 modulates enzymatic activity. In terms of tissue distribution, expressed in brain (at protein level).

The protein localises to the endoplasmic reticulum-Golgi intermediate compartment membrane. Its subcellular location is the endoplasmic reticulum membrane. It carries out the reaction L-lysyl-[protein] + acetyl-CoA = N(6)-acetyl-L-lysyl-[protein] + CoA + H(+). Endoplasmic reticulum (ER)-membrane-bound lysine N-acetyltransferase catalyzing the N6-acetylation of lysine residues in the lumen of the ER in various proteins, including PROM1 and BACE1, using acetyl-CoA as acetyl donor. Thereby, may regulate apoptosis through the acetylation and the regulation of the expression of PROM1. Acetylates and stabilizes BACE1 immature protein, leading to increased steady-state levels in neurons. By acting on BACE1 expression, may regulate amyloid beta-peptide formation. N(6)-lysine acetylation in ER maintains protein homeostasis and regulates reticulophagy. The protein is N-acetyltransferase 8B of Mus musculus (Mouse).